The chain runs to 390 residues: Dual-specificity RNA methyltransferase RlmN (390 aa).

The active-site Proton acceptor is the Glu-110. The Radical SAM core domain occupies Glu-116–Asp-355. The cysteines at positions 123 and 360 are disulfide-linked. 3 residues coordinate [4Fe-4S] cluster: Cys-130, Cys-134, and Cys-137. S-adenosyl-L-methionine contacts are provided by residues Gly-184 to Glu-185, Ser-216, Ser-238 to His-240, and Asn-317. The S-methylcysteine intermediate role is filled by Cys-360.

The protein belongs to the radical SAM superfamily. RlmN family. Requires [4Fe-4S] cluster as cofactor.

Its subcellular location is the cytoplasm. The enzyme catalyses adenosine(2503) in 23S rRNA + 2 reduced [2Fe-2S]-[ferredoxin] + 2 S-adenosyl-L-methionine = 2-methyladenosine(2503) in 23S rRNA + 5'-deoxyadenosine + L-methionine + 2 oxidized [2Fe-2S]-[ferredoxin] + S-adenosyl-L-homocysteine. It catalyses the reaction adenosine(37) in tRNA + 2 reduced [2Fe-2S]-[ferredoxin] + 2 S-adenosyl-L-methionine = 2-methyladenosine(37) in tRNA + 5'-deoxyadenosine + L-methionine + 2 oxidized [2Fe-2S]-[ferredoxin] + S-adenosyl-L-homocysteine. In terms of biological role, specifically methylates position 2 of adenine 2503 in 23S rRNA and position 2 of adenine 37 in tRNAs. m2A2503 modification seems to play a crucial role in the proofreading step occurring at the peptidyl transferase center and thus would serve to optimize ribosomal fidelity. This Haemophilus influenzae (strain ATCC 51907 / DSM 11121 / KW20 / Rd) protein is Dual-specificity RNA methyltransferase RlmN.